Consider the following 298-residue polypeptide: Zinc transport system membrane protein TroC (298 aa).

8 helical membrane passes run 16-36 (VVLG…FAVL), 41-61 (LFGD…FLLT), 68-88 (ILLL…LMVM), 97-117 (GAQG…LTHV), 144-164 (VLLI…FWKE), 187-207 (FMLT…VGVI), 229-249 (VLCA…SVVS), and 255-275 (LSTG…SIML).

Belongs to the ABC-3 integral membrane protein family.

Its subcellular location is the cell membrane. Functionally, part of an ATP-driven transport system TroABCD for zinc. The sequence is that of Zinc transport system membrane protein TroC (troC) from Treponema pallidum (strain Nichols).